Consider the following 618-residue polypeptide: Glycine--tRNA ligase 2 (618 aa).

A glycine-binding site is contributed by Glu-187. Residues 219-221 (RNE) and 230-231 (RV) each bind ATP. Glycine is bound at residue Glu-238. 347–348 (EC) lines the ATP pocket. Glycine is bound at residue 466–468 (EPS). Position 473 (Arg-473) interacts with ATP.

It belongs to the class-II aminoacyl-tRNA synthetase family. In terms of assembly, homodimer.

Its subcellular location is the cytoplasm. The enzyme catalyses tRNA(Gly) + glycine + ATP = glycyl-tRNA(Gly) + AMP + diphosphate. The catalysed reaction is 2 ATP + H(+) = P(1),P(4)-bis(5'-adenosyl) tetraphosphate + diphosphate. Its function is as follows. Catalyzes the ATP-dependent ligation of glycine to the 3'-end of its cognate tRNA, via the formation of an aminoacyl-adenylate intermediate (Gly-AMP). Also produces diadenosine tetraphosphate (Ap4A), a universal pleiotropic signaling molecule needed for cell regulation pathways, by direct condensation of 2 ATPs. Thereby, may play a special role in Ap4A homeostasis. The chain is Glycine--tRNA ligase 2 (GRS2) from Saccharomyces cerevisiae (strain ATCC 204508 / S288c) (Baker's yeast).